We begin with the raw amino-acid sequence, 128 residues long: Glycine cleavage system H protein (128 aa).

The region spanning 25–107 is the Lipoyl-binding domain; that stretch reads TITVGITHHA…YGAGWFFKIK (83 aa). Lys-66 is modified (N6-lipoyllysine).

The protein belongs to the GcvH family. In terms of assembly, the glycine cleavage system is composed of four proteins: P, T, L and H. Requires (R)-lipoate as cofactor.

The glycine cleavage system catalyzes the degradation of glycine. The H protein shuttles the methylamine group of glycine from the P protein to the T protein. This Neisseria meningitidis serogroup C (strain 053442) protein is Glycine cleavage system H protein.